We begin with the raw amino-acid sequence, 208 residues long: ATP synthase subunit beta, chloroplastic (208 aa).

This sequence belongs to the ATPase alpha/beta chains family. F-type ATPases have 2 components, CF(1) - the catalytic core - and CF(0) - the membrane proton channel. CF(1) has five subunits: alpha(3), beta(3), gamma(1), delta(1), epsilon(1). CF(0) has four main subunits: a(1), b(1), b'(1) and c(9-12).

The protein localises to the plastid. The protein resides in the chloroplast thylakoid membrane. It carries out the reaction ATP + H2O + 4 H(+)(in) = ADP + phosphate + 5 H(+)(out). In terms of biological role, produces ATP from ADP in the presence of a proton gradient across the membrane. The catalytic sites are hosted primarily by the beta subunits. This chain is ATP synthase subunit beta, chloroplastic (atpB), found in Lonchitis hirsuta (Tomato fern).